The sequence spans 88 residues: Antitoxin VapB21 (88 aa).

Functionally, antitoxin component of a type II toxin-antitoxin (TA) system. This chain is Antitoxin VapB21 (vapB21), found in Mycobacterium tuberculosis (strain CDC 1551 / Oshkosh).